The following is a 247-amino-acid chain: 2,3-bisphosphoglycerate-dependent phosphoglycerate mutase (247 aa).

Residues Arg8–Asn15, Thr21–Gly22, Arg60, Glu87–Tyr90, Lys98, Arg114–Arg115, and Gly183–Asn184 each bind substrate. His9 functions as the Tele-phosphohistidine intermediate in the catalytic mechanism. The active-site Proton donor/acceptor is Glu87.

The protein belongs to the phosphoglycerate mutase family. BPG-dependent PGAM subfamily. In terms of assembly, homodimer.

It catalyses the reaction (2R)-2-phosphoglycerate = (2R)-3-phosphoglycerate. It participates in carbohydrate degradation; glycolysis; pyruvate from D-glyceraldehyde 3-phosphate: step 3/5. Functionally, catalyzes the interconversion of 2-phosphoglycerate and 3-phosphoglycerate. The chain is 2,3-bisphosphoglycerate-dependent phosphoglycerate mutase from Delftia acidovorans (strain DSM 14801 / SPH-1).